Here is a 418-residue protein sequence, read N- to C-terminus: 3-phosphoshikimate 1-carboxyvinyltransferase (418 aa).

3-phosphoshikimate-binding residues include Lys-26, Ser-27, and Arg-31. Lys-26 lines the phosphoenolpyruvate pocket. 2 residues coordinate phosphoenolpyruvate: Gly-97 and Arg-125. Positions 170, 171, 172, 297, 320, and 324 each coordinate 3-phosphoshikimate. A phosphoenolpyruvate-binding site is contributed by Gln-172. Asp-297 (proton acceptor) is an active-site residue. Phosphoenolpyruvate is bound by residues Arg-328, Arg-375, and Lys-400.

This sequence belongs to the EPSP synthase family. Monomer.

The protein resides in the cytoplasm. It carries out the reaction 3-phosphoshikimate + phosphoenolpyruvate = 5-O-(1-carboxyvinyl)-3-phosphoshikimate + phosphate. The protein operates within metabolic intermediate biosynthesis; chorismate biosynthesis; chorismate from D-erythrose 4-phosphate and phosphoenolpyruvate: step 6/7. Its function is as follows. Catalyzes the transfer of the enolpyruvyl moiety of phosphoenolpyruvate (PEP) to the 5-hydroxyl of shikimate-3-phosphate (S3P) to produce enolpyruvyl shikimate-3-phosphate and inorganic phosphate. This chain is 3-phosphoshikimate 1-carboxyvinyltransferase, found in Pseudomonas syringae pv. syringae (strain B728a).